We begin with the raw amino-acid sequence, 94 residues long: Co-chaperonin GroES (94 aa).

Belongs to the GroES chaperonin family. As to quaternary structure, heptamer of 7 subunits arranged in a ring. Interacts with the chaperonin GroEL.

Its subcellular location is the cytoplasm. Its function is as follows. Together with the chaperonin GroEL, plays an essential role in assisting protein folding. The GroEL-GroES system forms a nano-cage that allows encapsulation of the non-native substrate proteins and provides a physical environment optimized to promote and accelerate protein folding. GroES binds to the apical surface of the GroEL ring, thereby capping the opening of the GroEL channel. The polypeptide is Co-chaperonin GroES (Clostridium perfringens (strain SM101 / Type A)).